The primary structure comprises 478 residues: Cytochrome c-552 (478 aa).

The signal sequence occupies residues 1–26; that stretch reads MARKTLRARRFFSLIFPFFFITSVYA. His94 is a heme c binding site. Cys122, Cys125, and Lys126 together coordinate heme. Heme c is bound by residues Cys160, Cys163, His164, Cys209, Cys212, and His213. Ca(2+) is bound by residues Glu215, Tyr216, Lys261, and Gln263. Residue Tyr216 coordinates substrate. His264 is a binding site for substrate. The heme c site is built by His275, Cys282, Cys285, His286, His301, Cys314, Cys317, His318, and His393.

The protein belongs to the cytochrome c-552 family. It depends on Ca(2+) as a cofactor. Heme c is required as a cofactor.

The protein localises to the periplasm. The enzyme catalyses 6 Fe(III)-[cytochrome c] + NH4(+) + 2 H2O = 6 Fe(II)-[cytochrome c] + nitrite + 8 H(+). The protein operates within nitrogen metabolism; nitrate reduction (assimilation). Catalyzes the reduction of nitrite to ammonia, consuming six electrons in the process. The polypeptide is Cytochrome c-552 (Salmonella agona (strain SL483)).